We begin with the raw amino-acid sequence, 205 residues long: Holliday junction branch migration complex subunit RuvA (205 aa).

The interval 1–64 (MIGRLKGILV…EDAQLLYGFI (64 aa)) is domain I. A domain II region spans residues 65–143 (HKEERSLFRL…SLMEASMGAE (79 aa)). The interval 144–156 (REFVLKSNFTPAP) is flexible linker. Residues 157-205 (VAATVEEDAIAALLSLGYKPQQASKAVSSAFQEGMDPEQLIKAALKSML) are domain III.

It belongs to the RuvA family. As to quaternary structure, homotetramer. Forms an RuvA(8)-RuvB(12)-Holliday junction (HJ) complex. HJ DNA is sandwiched between 2 RuvA tetramers; dsDNA enters through RuvA and exits via RuvB. An RuvB hexamer assembles on each DNA strand where it exits the tetramer. Each RuvB hexamer is contacted by two RuvA subunits (via domain III) on 2 adjacent RuvB subunits; this complex drives branch migration. In the full resolvosome a probable DNA-RuvA(4)-RuvB(12)-RuvC(2) complex forms which resolves the HJ.

It is found in the cytoplasm. Its function is as follows. The RuvA-RuvB-RuvC complex processes Holliday junction (HJ) DNA during genetic recombination and DNA repair, while the RuvA-RuvB complex plays an important role in the rescue of blocked DNA replication forks via replication fork reversal (RFR). RuvA specifically binds to HJ cruciform DNA, conferring on it an open structure. The RuvB hexamer acts as an ATP-dependent pump, pulling dsDNA into and through the RuvAB complex. HJ branch migration allows RuvC to scan DNA until it finds its consensus sequence, where it cleaves and resolves the cruciform DNA. This Shewanella amazonensis (strain ATCC BAA-1098 / SB2B) protein is Holliday junction branch migration complex subunit RuvA.